A 55-amino-acid chain; its full sequence is Glycine-rich antimicrobial peptide Pg-AMP (55 aa).

Over residues 18-39 (GYGGYGGGRYGGGYGSGRGQPV) the composition is skewed to gly residues. Residues 18–55 (GYGGYGGGRYGGGYGSGRGQPVGQGVERSHDDNRNQPR) form a disordered region. Residues 44–55 (ERSHDDNRNQPR) are compositionally biased toward basic and acidic residues.

In terms of assembly, monomer and homodimer. Might act by homodimer formation.

Has antibacterial activity against the Gram-negative bacteria Klebsiella sp., Proteus sp., E.coli ATCC 8739 (MIC=72 ug/ml) and K.pneumoniae (MIC=32 ug/ml). Has no activity against the Gram-negative bacterium S.typhimurium or the Gram-positive bacterium S.aureus. Does not have antifungal activity against the human and plant pathogenic fungi F.oxysporum, A.fumigatus and R.solani. The polypeptide is Glycine-rich antimicrobial peptide Pg-AMP (Psidium guajava (Guava)).